Reading from the N-terminus, the 398-residue chain is tRNA-specific 2-thiouridylase MnmA (398 aa).

Residues 18-25 (AMSGGVDS) and Leu44 each bind ATP. Cys112 (nucleophile) is an active-site residue. Cysteines 112 and 213 form a disulfide. ATP is bound at residue Gly136. The tract at residues 163 to 165 (RDQ) is interaction with tRNA. Cys213 functions as the Cysteine persulfide intermediate in the catalytic mechanism.

Belongs to the MnmA/TRMU family.

The protein localises to the cytoplasm. It catalyses the reaction S-sulfanyl-L-cysteinyl-[protein] + uridine(34) in tRNA + AH2 + ATP = 2-thiouridine(34) in tRNA + L-cysteinyl-[protein] + A + AMP + diphosphate + H(+). Catalyzes the 2-thiolation of uridine at the wobble position (U34) of tRNA, leading to the formation of s(2)U34. The sequence is that of tRNA-specific 2-thiouridylase MnmA from Agrobacterium fabrum (strain C58 / ATCC 33970) (Agrobacterium tumefaciens (strain C58)).